A 294-amino-acid chain; its full sequence is 4-hydroxy-tetrahydrodipicolinate synthase (294 aa).

Thr45 contacts pyruvate. Tyr133 (proton donor/acceptor) is an active-site residue. The Schiff-base intermediate with substrate role is filled by Lys161. Residue Ile203 participates in pyruvate binding.

Belongs to the DapA family. Homotetramer; dimer of dimers.

Its subcellular location is the cytoplasm. The catalysed reaction is L-aspartate 4-semialdehyde + pyruvate = (2S,4S)-4-hydroxy-2,3,4,5-tetrahydrodipicolinate + H2O + H(+). It participates in amino-acid biosynthesis; L-lysine biosynthesis via DAP pathway; (S)-tetrahydrodipicolinate from L-aspartate: step 3/4. Its function is as follows. Catalyzes the condensation of (S)-aspartate-beta-semialdehyde [(S)-ASA] and pyruvate to 4-hydroxy-tetrahydrodipicolinate (HTPA). This is 4-hydroxy-tetrahydrodipicolinate synthase from Buchnera aphidicola subsp. Acyrthosiphon pisum (strain 5A).